The primary structure comprises 1888 residues: Protein mms22 (1888 aa).

Disordered stretches follow at residues 12–34 (DSQD…RGNE), 151–258 (FSSD…ISSN), and 316–354 (RRKL…SRFD). 3 stretches are compositionally biased toward polar residues: residues 13 to 32 (SQDS…SQRG), 212 to 227 (SNLN…SSTI), and 338 to 348 (SDNSISTPTPT).

The protein belongs to the MMS22 family.

It is found in the nucleus. Functionally, involved in protection against replication-dependent DNA damage. May act by restoring active replication forks, repairing unusual DNA structures, and/or preventing aberrant DNA rearrangement at arrested replication forks. The polypeptide is Protein mms22 (mus7) (Schizosaccharomyces pombe (strain 972 / ATCC 24843) (Fission yeast)).